We begin with the raw amino-acid sequence, 379 residues long: tRNA-specific 2-thiouridylase MnmA (379 aa).

Residues 6-13 (AMSGGVDS) and Leu32 each bind ATP. The active-site Nucleophile is the Cys101. Cys101 and Cys199 are oxidised to a cystine. Residue Gly125 participates in ATP binding. The interval 148–150 (KDQ) is interaction with tRNA. Residue Cys199 is the Cysteine persulfide intermediate of the active site.

Belongs to the MnmA/TRMU family.

It is found in the cytoplasm. It carries out the reaction S-sulfanyl-L-cysteinyl-[protein] + uridine(34) in tRNA + AH2 + ATP = 2-thiouridine(34) in tRNA + L-cysteinyl-[protein] + A + AMP + diphosphate + H(+). Its function is as follows. Catalyzes the 2-thiolation of uridine at the wobble position (U34) of tRNA, leading to the formation of s(2)U34. The sequence is that of tRNA-specific 2-thiouridylase MnmA from Arthrobacter sp. (strain FB24).